The sequence spans 474 residues: uncharacterized protein (474 aa).

Residues 1–14 (MGSRYPSHQLSNGL) show a composition bias toward polar residues. Residues 1–137 (MGSRYPSHQL…QSGGVTRQNS (137 aa)) form a disordered region. At serine 45 the chain carries Phosphoserine. 3 stretches are compositionally biased toward polar residues: residues 73-83 (RSGSFAGTAQS), 97-113 (SLAS…NSGP), and 125-137 (SGPQ…RQNS). Serine 169 carries the post-translational modification Phosphoserine. 2 helical membrane-spanning segments follow: residues 210–230 (VLWL…FILG) and 236–256 (ILLV…IWNI).

The protein localises to the membrane. This is an uncharacterized protein from Arabidopsis thaliana (Mouse-ear cress).